We begin with the raw amino-acid sequence, 167 residues long: Small ribosomal subunit protein uS5 (167 aa).

The S5 DRBM domain maps to 12 to 75 (LNEKLIAVNR…EKARRNIRDV (64 aa)).

This sequence belongs to the universal ribosomal protein uS5 family. Part of the 30S ribosomal subunit. Contacts proteins S4 and S8.

In terms of biological role, with S4 and S12 plays an important role in translational accuracy. Functionally, located at the back of the 30S subunit body where it stabilizes the conformation of the head with respect to the body. The chain is Small ribosomal subunit protein uS5 from Psychromonas ingrahamii (strain DSM 17664 / CCUG 51855 / 37).